A 90-amino-acid chain; its full sequence is Protein AF1q (90 aa).

Positions 24–32 (LSELEGLGL) match the Nuclear export signal motif. Ser84 carries the post-translational modification Phosphoserine.

The protein belongs to the MLLT11 family. In terms of assembly, interacts with HSPA8 and LAMP2 isoform A; the interaction may target MLLT11 for degradation via chaperone-mediated autophagy. Interacts with TCF7. In terms of processing, ubiquitinated, leading to degradation.

The protein localises to the nucleus. The protein resides in the cytoplasm. Its subcellular location is the cytoskeleton. It is found in the microtubule organizing center. It localises to the centrosome. Functionally, cofactor for the transcription factor TCF7. Involved in regulation of lymphoid development by driving multipotent hematopoietic progenitor cells towards a T-cell fate. The polypeptide is Protein AF1q (MLLT11) (Pongo abelii (Sumatran orangutan)).